The chain runs to 1072 residues: Teashirt homolog 3 (1072 aa).

Disordered stretches follow at residues 44-71 (ACPSYQNSPAAEFSSHEMDSESHISETS), 130-153 (PSSENNGGGSSSSSSSSSSSCGSG), and 228-247 (HYRDDNHETDNNNPKRWSKP). Over residues 57–71 (SSHEMDSESHISETS) the composition is skewed to basic and acidic residues. 2 C2H2-type zinc fingers span residues 204-228 (FRCKDCSAAYDTLVELTVHMNETGH) and 265-289 (LKCMYCGHSFESLQDLSVHMIKTKH). The segment covering 228 to 237 (HYRDDNHETD) has biased composition (basic and acidic residues). Residues 315–336 (SLELELPSSPDSTGGTPKATLS) are disordered. A C2H2-type 3; atypical zinc finger spans residues 376-400 (LKCMECGSSHDTLQELTAHMMVTGH). A compositionally biased stretch (basic and acidic residues) spans 469 to 481 (AVLDEKPKEKEKA). Disordered stretches follow at residues 469–489 (AVLDEKPKEKEKASEEEEKYD), 569–594 (NSEIVSPTKTQTLVSPPSSQTSPMPK), 616–690 (EKMK…PLSG), 784–815 (TKGKSDKGCSLGSGLLSPTSTSPATSSSTVTT), and 846–888 (TESH…RQSN). Composition is skewed to polar residues over residues 571-593 (EIVSPTKTQTLVSPPSSQTSPMP) and 649-660 (SSGSGFKSQENS). Phosphoserine is present on serine 672. Composition is skewed to low complexity over residues 791–815 (GCSLGSGLLSPTSTSPATSSSTVTT) and 847–860 (ESHTSKSSTPSSIS). Residues 882-952 (RKGRQSNWNP…NVKYQLRRTG (71 aa)) constitute a DNA-binding region (homeobox; atypical). 2 C2H2-type zinc fingers span residues 967–989 (FFCNDCASQIRTPSTYISHLESH) and 1032–1055 (YQCKLCNRTFASKHAVKLHLSKTH).

Belongs to the teashirt C2H2-type zinc-finger protein family. Interacts (via N-terminus) with HDAC1 and HDAC2; the interaction is direct. Found in a trimeric complex with APBB1 and HDAC1; the interaction between HDAC1 and APBB1 is mediated by TSHZ3. Interacts (via homeobox domain) with APBB1 (via PID domain 1). In terms of tissue distribution, expressed in cortical neurons.

It is found in the nucleus. Its subcellular location is the cell projection. It localises to the growth cone. Functionally, transcriptional regulator involved in developmental processes. Functions in association with APBB1, SET and HDAC factors as a transcriptional repressor, that inhibits the expression of CASP4. TSHZ3-mediated transcription repression involves the recruitment of histone deacetylases HDAC1 and HDAC2. Associates with chromatin in a region surrounding the CASP4 transcriptional start site(s). Regulates the development of neurons involved in both respiratory rhythm and airflow control. Promotes maintenance of nucleus ambiguus (nA) motoneurons, which govern upper airway function, and establishes a respiratory rhythm generator (RRG) activity compatible with survival at birth. Involved in the differentiation of the proximal uretic smooth muscle cells during developmental processes. Involved in the up-regulation of myocardin, that directs the expression of smooth muscle cells in the proximal ureter. Involved in the modulation of glutamatergic synaptic transmission and long-term synaptic potentiation. This is Teashirt homolog 3 (Tshz3) from Rattus norvegicus (Rat).